Reading from the N-terminus, the 336-residue chain is Probable deoxyhypusine synthase (336 aa).

Residue K308 is the Nucleophile of the active site.

Belongs to the deoxyhypusine synthase family. Requires NAD(+) as cofactor.

It carries out the reaction [eIF5A protein]-L-lysine + spermidine = [eIF5A protein]-deoxyhypusine + propane-1,3-diamine. It functions in the pathway protein modification; eIF5A hypusination. Functionally, catalyzes the NAD-dependent oxidative cleavage of spermidine and the subsequent transfer of the butylamine moiety of spermidine to the epsilon-amino group of a specific lysine residue of the eIF-5A precursor protein to form the intermediate deoxyhypusine residue. The sequence is that of Probable deoxyhypusine synthase from Thermococcus gammatolerans (strain DSM 15229 / JCM 11827 / EJ3).